Reading from the N-terminus, the 436-residue chain is Na(+)/H(+) antiporter NhaA (436 aa).

11 helical membrane-spanning segments follow: residues 31–51, 74–94, 112–132, 143–163, 173–193, 196–216, 222–242, 285–305, 315–335, 350–370, and 384–404; these read VGGA…NSPG, LSLG…IAGL, IVPI…YTLI, GWAI…AVIS, FLLT…AVFY, NLQP…TWAV, SWYL…ESGV, VAVP…WAGF, IGII…ATFL, WIDV…SLLI, and HAKV…TVIL.

Belongs to the NhaA Na(+)/H(+) (TC 2.A.33) antiporter family.

Its subcellular location is the cell membrane. The catalysed reaction is Na(+)(in) + 2 H(+)(out) = Na(+)(out) + 2 H(+)(in). Its function is as follows. Na(+)/H(+) antiporter that extrudes sodium in exchange for external protons. The sequence is that of Na(+)/H(+) antiporter NhaA from Renibacterium salmoninarum (strain ATCC 33209 / DSM 20767 / JCM 11484 / NBRC 15589 / NCIMB 2235).